We begin with the raw amino-acid sequence, 369 residues long: Glycine oxidase (369 aa).

FAD-binding positions include 14–15 (II), 34–35 (ES), 42–43 (AT), 47–49 (AGM), and V174. Substrate-binding residues include R302 and R329. Residue 327 to 333 (HFRNGIL) participates in FAD binding.

Belongs to the DAO family. ThiO subfamily. In terms of assembly, homotetramer. It depends on FAD as a cofactor.

It carries out the reaction glycine + O2 + H2O = glyoxylate + H2O2 + NH4(+). The catalysed reaction is glyphosate + O2 + H2O = aminomethylphosphonate + glyoxylate + H2O2 + H(+). The enzyme catalyses N-ethylglycine + O2 + H2O = ethylamine + glyoxylate + H2O2. It catalyses the reaction sarcosine + O2 + H2O = methylamine + glyoxylate + H2O2. It carries out the reaction D-alanine + O2 + H2O = pyruvate + H2O2 + NH4(+). It participates in cofactor biosynthesis; thiamine diphosphate biosynthesis. Functionally, catalyzes the FAD-dependent oxidative deamination of glycine, leading to glyoxylate, ammonia and hydrogen peroxide. Is also able to act on various amines and D-amino acids to yield the corresponding alpha-keto acids, ammonia/amine, and hydrogen peroxide. Can also oxidize the herbicide glyphosate (N-phosphonomethylglycine), and thus may be involved in the degradation pathway that allows B.licheniformis J33-8 to grow with glyphosate as the sole source of carbon. Is essential for thiamine biosynthesis since the oxidation of glycine catalyzed by ThiO generates the glycine imine intermediate (dehydroglycine) required for the biosynthesis of the thiazole ring of thiamine pyrophosphate. This chain is Glycine oxidase, found in Bacillus licheniformis.